A 658-amino-acid polypeptide reads, in one-letter code: Alkyldihydroxyacetonephosphate synthase, peroxisomal (658 aa).

The segment covering 1–24 (MAEAAAAAAAAAAAGETSASSGSA) has biased composition (low complexity). Positions 1 to 37 (MAEAAAAAAAAAAAGETSASSGSAAERDPDQDRAGRR) are disordered. The transit peptide at 1–58 (MAEAAAAAAAAAAAGETSASSGSAAERDPDQDRAGRRLRVLSGHLLGRPQEALSTNEC) directs the protein to the peroxisome. Over residues 25 to 35 (AERDPDQDRAG) the composition is skewed to basic and acidic residues. Ser-65 bears the Phosphoserine mark. Thr-74 carries the post-translational modification Phosphothreonine. Lys-102 is subject to N6-acetyllysine. An FAD-binding PCMH-type domain is found at 202 to 384 (FERIPDIVLW…TEATIKIRPT (183 aa)). FAD-binding positions include 234 to 240 (PIGGGTS), 303 to 309 (DSLEFST), and 316 to 319 (TRAS). Position 347 is an N6-acetyllysine (Lys-347). FAD is bound at residue 368–374 (EGTLGVI). Residue Arg-515 participates in substrate binding. The active-site Proton donor/acceptor is Tyr-578. 2 important for enzyme activity regions span residues 615–617 (HHH) and 654–658 (NRNLL).

The protein belongs to the FAD-binding oxidoreductase/transferase type 4 family. In terms of assembly, homodimer. Requires FAD as cofactor.

Its subcellular location is the peroxisome membrane. It localises to the peroxisome. The catalysed reaction is a long chain fatty alcohol + a 1-acylglycerone 3-phosphate = a 1-O-alkylglycerone 3-phosphate + a long-chain fatty acid + H(+). It catalyses the reaction hexadecan-1-ol + 1-hexadecanoylglycerone 3-phosphate = 1-O-hexadecylglycerone 3-phosphate + hexadecanoate + H(+). The enzyme catalyses 1-hexadecanoylglycerone 3-phosphate + a long-chain fatty acid = a 1-acylglycerone 3-phosphate + hexadecanoate. Its pathway is glycerolipid metabolism; ether lipid biosynthesis. Its activity is regulated as follows. Inhibited by N-ethylmaleimide, p-bromophenacylbromide, 2,4- dinitrofluorobenzene and divalent cations such as such as Mn(2+), Mg(2+) and Zn(2+). Inhibition by p-bromophenacylbromide is strongly pH dependent and is highest at alkaline conditions. Its function is as follows. Catalyzes the exchange of the acyl chain in acyl-dihydroxyacetonephosphate (acyl-DHAP) for a long chain fatty alcohol, yielding the first ether linked intermediate, i.e. alkyl-dihydroxyacetonephosphate (alkyl-DHAP), in the pathway of ether lipid biosynthesis. This is Alkyldihydroxyacetonephosphate synthase, peroxisomal (AGPS) from Cavia porcellus (Guinea pig).